Reading from the N-terminus, the 369-residue chain is Homoserine O-succinyltransferase (369 aa).

The interval 90-93 is important for substrate specificity; it reads GISA. An AB hydrolase-1 domain is found at 107–353; it reads WWSGAVGVRA…YGHDAFLKED (247 aa). Ser-175 functions as the Nucleophile in the catalytic mechanism. Residue Arg-236 participates in substrate binding. Residues Asp-316 and His-346 contribute to the active site. Residue Asp-347 participates in substrate binding.

The protein belongs to the AB hydrolase superfamily. MetX family. In terms of assembly, homodimer.

The protein localises to the cytoplasm. It carries out the reaction L-homoserine + succinyl-CoA = O-succinyl-L-homoserine + CoA. It functions in the pathway amino-acid biosynthesis; L-methionine biosynthesis via de novo pathway; O-succinyl-L-homoserine from L-homoserine: step 1/1. In terms of biological role, transfers a succinyl group from succinyl-CoA to L-homoserine, forming succinyl-L-homoserine. This chain is Homoserine O-succinyltransferase, found in Brevundimonas diminuta (strain ATCC 11568 / DSM 7234 / NBRC 12697 / NCIMB 9393 / NCTC 8545).